We begin with the raw amino-acid sequence, 879 residues long: Phosphoinositide 3-kinase regulatory subunit 5 (879 aa).

The heterodimerization stretch occupies residues 23–100; that stretch reads SGSTDISSNW…APYIPETSDL (78 aa). 2 disordered regions span residues 314 to 345 and 570 to 590; these read SLEDDVTEEDEEVDFEEVDDKDEDGGKSPKQD and SSSTNAPMTNAESPLKSPSPS. A compositionally biased stretch (acidic residues) spans 315–336; it reads LEDDVTEEDEEVDFEEVDDKDE. A compositionally biased stretch (polar residues) spans 570–589; sequence SSSTNAPMTNAESPLKSPSP. Residues 651-751 form an interaction with beta-gamma G protein dimers region; it reads PILADMVLYY…WSNGEKVCTS (101 aa).

In terms of assembly, heterodimer. Interacts with a catalytic subunit and with beta-gamma G protein dimers.

The protein localises to the nucleus. Its subcellular location is the cytoplasm. It is found in the cell membrane. With respect to regulation, greatly activated by G gamma proteins. Regulatory subunit of the PI3K gamma complex. Required for recruitment of the catalytic subunit to the plasma membrane via interaction with beta-gamma G protein dimers. Required for G protein-mediated activation of PIK3CG. In Xenopus laevis (African clawed frog), this protein is Phosphoinositide 3-kinase regulatory subunit 5 (pik3r5).